The chain runs to 84 residues: Small ribosomal subunit protein bS16 (84 aa).

It belongs to the bacterial ribosomal protein bS16 family.

This chain is Small ribosomal subunit protein bS16, found in Acaryochloris marina (strain MBIC 11017).